A 711-amino-acid chain; its full sequence is Mitochondrial intermediate peptidase (711 aa).

A mitochondrion-targeting transit peptide spans 1–33 (MLLAAGARYARRLCGRGAAAALQGRTGRSCARD). K124 is subject to N6-acetyllysine. H493 lines the Zn(2+) pocket. E494 is an active-site residue. Zn(2+) is bound by residues H497 and H500.

This sequence belongs to the peptidase M3 family. As to quaternary structure, monomer. It depends on Zn(2+) as a cofactor.

Its subcellular location is the mitochondrion matrix. It carries out the reaction Release of an N-terminal octapeptide as second stage of processing of some proteins imported into the mitochondrion.. With respect to regulation, activity is divalent cation-dependent. It is stimulated by manganese, magnesium or calcium ions and reversibly inhibited by zinc, cobalt and iron. Functionally, cleaves proteins, imported into the mitochondrion, to their mature size. This is Mitochondrial intermediate peptidase (Mipep) from Mus musculus (Mouse).